A 267-amino-acid polypeptide reads, in one-letter code: Coiled-coil domain-containing protein 172 (267 aa).

2 coiled-coil regions span residues 24–97 and 128–191; these read MREV…CEAI and LMKE…EETE.

This sequence belongs to the CCDC172 family. May interact with TEKT2.

The protein resides in the cytoplasm. Its subcellular location is the cell projection. It is found in the cilium. The polypeptide is Coiled-coil domain-containing protein 172 (Ccdc172) (Mus musculus (Mouse)).